The chain runs to 599 residues: Elongation factor 4 (599 aa).

A tr-type G domain is found at 2–184 (KNIRNFSIIA…RLVRDIPPPE (183 aa)). GTP-binding positions include 14–19 (DHGKST) and 131–134 (NKID).

The protein belongs to the TRAFAC class translation factor GTPase superfamily. Classic translation factor GTPase family. LepA subfamily.

The protein resides in the cell inner membrane. It carries out the reaction GTP + H2O = GDP + phosphate + H(+). In terms of biological role, required for accurate and efficient protein synthesis under certain stress conditions. May act as a fidelity factor of the translation reaction, by catalyzing a one-codon backward translocation of tRNAs on improperly translocated ribosomes. Back-translocation proceeds from a post-translocation (POST) complex to a pre-translocation (PRE) complex, thus giving elongation factor G a second chance to translocate the tRNAs correctly. Binds to ribosomes in a GTP-dependent manner. This is Elongation factor 4 from Escherichia coli O8 (strain IAI1).